The following is a 123-amino-acid chain: Holo-[acyl-carrier-protein] synthase (123 aa).

The Mg(2+) site is built by Asp8 and Glu50.

The protein belongs to the P-Pant transferase superfamily. AcpS family. It depends on Mg(2+) as a cofactor.

Its subcellular location is the cytoplasm. It carries out the reaction apo-[ACP] + CoA = holo-[ACP] + adenosine 3',5'-bisphosphate + H(+). In terms of biological role, transfers the 4'-phosphopantetheine moiety from coenzyme A to a Ser of acyl-carrier-protein. The sequence is that of Holo-[acyl-carrier-protein] synthase from Kocuria rhizophila (strain ATCC 9341 / DSM 348 / NBRC 103217 / DC2201).